The following is a 253-amino-acid chain: uncharacterized protein (253 aa).

Gly7–Thr14 lines the ATP pocket.

This sequence to M.jannaschii MJ0084 and MJ0823.

This is an uncharacterized protein from Methanocaldococcus jannaschii (strain ATCC 43067 / DSM 2661 / JAL-1 / JCM 10045 / NBRC 100440) (Methanococcus jannaschii).